The sequence spans 550 residues: Tyrosinase HcTyr2 (550 aa).

Cu cation contacts are provided by His-56, His-84, His-93, His-282, His-286, and His-326.

This sequence belongs to the tyrosinase family. Cu(2+) is required as a cofactor.

The catalysed reaction is L-tyrosine + O2 = L-dopaquinone + H2O. It carries out the reaction 2 L-tyrosine + O2 = 2 L-dopa. The enzyme catalyses 2 L-dopa + O2 = 2 L-dopaquinone + 2 H2O. Its function is as follows. Copper-containing oxidase that catalyzes the conversion of L-tyrosine to L-dopa and then to L-dopaquinone. Can use various phenols such as p-coumaric acid, phenol, pyrocatechol, syringol or pyrogallol. Accepts several of the constituents of lignin and potentially participates in lignin functionalization. This Hahella sp. (strain CCB-MM4) protein is Tyrosinase HcTyr2.